A 201-amino-acid chain; its full sequence is Translation machinery-associated protein 22 (201 aa).

Residues 104–175 form the SUI1 domain; it reads VTVKRIERNK…EIKEFIVEKY (72 aa).

This sequence belongs to the DENR family. Interacts with the 40S ribosomal subunit.

The protein resides in the cytoplasm. In Pyricularia oryzae (strain 70-15 / ATCC MYA-4617 / FGSC 8958) (Rice blast fungus), this protein is Translation machinery-associated protein 22 (TMA22).